Here is a 96-residue protein sequence, read N- to C-terminus: MTIRPLHDRVVVKRLEAEEKTASGIVLPGAAAEKPDMGEVIAVGAGKIGKDGSRRPLDVKVGDKIIFGKYSGQTVKADGEELLVMREEDIFGIVEK.

It belongs to the GroES chaperonin family. In terms of assembly, heptamer of 7 subunits arranged in a ring. Interacts with the chaperonin GroEL.

It is found in the cytoplasm. In terms of biological role, together with the chaperonin GroEL, plays an essential role in assisting protein folding. The GroEL-GroES system forms a nano-cage that allows encapsulation of the non-native substrate proteins and provides a physical environment optimized to promote and accelerate protein folding. GroES binds to the apical surface of the GroEL ring, thereby capping the opening of the GroEL channel. The sequence is that of Co-chaperonin GroES from Neisseria meningitidis serogroup B (strain ATCC BAA-335 / MC58).